Consider the following 296-residue polypeptide: Xyloglucan endotransglucosylase/hydrolase 1 (296 aa).

The signal sequence occupies residues Met-1–Cys-23. Positions Ala-24–Tyr-222 constitute a GH16 domain. Catalysis depends on Glu-108, which acts as the Nucleophile. The active-site Proton donor is the Glu-112. Xyloglucan is bound at residue Glu-112. Asn-116 carries N-linked (GlcNAc...) asparagine glycosylation. Xyloglucan is bound by residues Gln-125–Asn-127, Asp-135–Glu-137, Asp-201–Trp-202, and Gly-206. Disulfide bonds link Cys-230–Cys-239 and Cys-276–Cys-290. Arg-281 is a xyloglucan binding site.

Belongs to the glycosyl hydrolase 16 family. XTH group 1 subfamily. In terms of processing, contains at least one intrachain disulfide bond essential for its enzymatic activity. Post-translationally, N-glycosylated; not essential for its enzymatic activity.

It localises to the secreted. Its subcellular location is the cell wall. The protein localises to the extracellular space. The protein resides in the apoplast. The catalysed reaction is breaks a beta-(1-&gt;4) bond in the backbone of a xyloglucan and transfers the xyloglucanyl segment on to O-4 of the non-reducing terminal glucose residue of an acceptor, which can be a xyloglucan or an oligosaccharide of xyloglucan.. Catalyzes xyloglucan endohydrolysis (XEH) and/or endotransglycosylation (XET). Cleaves and religates xyloglucan polymers, an essential constituent of the primary cell wall, and thereby participates in cell wall construction of growing tissues. This is Xyloglucan endotransglucosylase/hydrolase 1 from Glycine max (Soybean).